The primary structure comprises 359 residues: Histidinol-phosphate aminotransferase (359 aa).

Lys217 carries the N6-(pyridoxal phosphate)lysine modification.

Belongs to the class-II pyridoxal-phosphate-dependent aminotransferase family. Histidinol-phosphate aminotransferase subfamily. Homodimer. It depends on pyridoxal 5'-phosphate as a cofactor.

The enzyme catalyses L-histidinol phosphate + 2-oxoglutarate = 3-(imidazol-4-yl)-2-oxopropyl phosphate + L-glutamate. It participates in amino-acid biosynthesis; L-histidine biosynthesis; L-histidine from 5-phospho-alpha-D-ribose 1-diphosphate: step 7/9. The chain is Histidinol-phosphate aminotransferase from Salmonella enteritidis PT4 (strain P125109).